Here is a 307-residue protein sequence, read N- to C-terminus: Elongation factor Ts (307 aa).

The interval 79 to 82 is involved in Mg(2+) ion dislocation from EF-Tu; the sequence is TDFV.

This sequence belongs to the EF-Ts family.

Its subcellular location is the cytoplasm. In terms of biological role, associates with the EF-Tu.GDP complex and induces the exchange of GDP to GTP. It remains bound to the aminoacyl-tRNA.EF-Tu.GTP complex up to the GTP hydrolysis stage on the ribosome. This is Elongation factor Ts from Sinorhizobium medicae (strain WSM419) (Ensifer medicae).